The primary structure comprises 420 residues: Dihydrolipoyllysine-residue succinyltransferase component of 2-oxoglutarate dehydrogenase complex (420 aa).

One can recognise a Lipoyl-binding domain in the interval 3–78 (KINILVPDLP…ISQQTLGEIN (76 aa)). Lys-44 is subject to N6-lipoyllysine. Active-site residues include His-391 and Asp-395.

The protein belongs to the 2-oxoacid dehydrogenase family. As to quaternary structure, forms a 24-polypeptide structural core with octahedral symmetry. Part of the 2-oxoglutarate dehydrogenase (OGDH) complex composed of E1 (2-oxoglutarate dehydrogenase), E2 (dihydrolipoamide succinyltransferase) and E3 (dihydrolipoamide dehydrogenase); the complex contains multiple copies of the three enzymatic components (E1, E2 and E3). (R)-lipoate is required as a cofactor.

It carries out the reaction N(6)-[(R)-dihydrolipoyl]-L-lysyl-[protein] + succinyl-CoA = N(6)-[(R)-S(8)-succinyldihydrolipoyl]-L-lysyl-[protein] + CoA. The protein operates within amino-acid degradation; L-lysine degradation via saccharopine pathway; glutaryl-CoA from L-lysine: step 6/6. Its function is as follows. E2 component of the 2-oxoglutarate dehydrogenase (OGDH) complex which catalyzes the second step in the conversion of 2-oxoglutarate to succinyl-CoA and CO(2). The chain is Dihydrolipoyllysine-residue succinyltransferase component of 2-oxoglutarate dehydrogenase complex (sucB) from Buchnera aphidicola subsp. Acyrthosiphon pisum (strain APS) (Acyrthosiphon pisum symbiotic bacterium).